The chain runs to 305 residues: UDP-N-acetylenolpyruvoylglucosamine reductase (305 aa).

Residues Arg-34–Lys-199 enclose the FAD-binding PCMH-type domain. Residue Arg-179 is part of the active site. Ser-228 serves as the catalytic Proton donor. The active site involves Glu-298.

The protein belongs to the MurB family. FAD serves as cofactor.

It localises to the cytoplasm. The catalysed reaction is UDP-N-acetyl-alpha-D-muramate + NADP(+) = UDP-N-acetyl-3-O-(1-carboxyvinyl)-alpha-D-glucosamine + NADPH + H(+). The protein operates within cell wall biogenesis; peptidoglycan biosynthesis. Functionally, cell wall formation. This Bradyrhizobium diazoefficiens (strain JCM 10833 / BCRC 13528 / IAM 13628 / NBRC 14792 / USDA 110) protein is UDP-N-acetylenolpyruvoylglucosamine reductase.